Consider the following 318-residue polypeptide: Methionyl-tRNA formyltransferase (318 aa).

112-115 serves as a coordination point for (6S)-5,6,7,8-tetrahydrofolate; it reads SILP.

This sequence belongs to the Fmt family.

The enzyme catalyses L-methionyl-tRNA(fMet) + (6R)-10-formyltetrahydrofolate = N-formyl-L-methionyl-tRNA(fMet) + (6S)-5,6,7,8-tetrahydrofolate + H(+). Attaches a formyl group to the free amino group of methionyl-tRNA(fMet). The formyl group appears to play a dual role in the initiator identity of N-formylmethionyl-tRNA by promoting its recognition by IF2 and preventing the misappropriation of this tRNA by the elongation apparatus. The protein is Methionyl-tRNA formyltransferase of Shewanella sp. (strain MR-7).